The following is a 60-amino-acid chain: UPF0181 protein PMI1604 (60 aa).

The protein belongs to the UPF0181 family.

This Proteus mirabilis (strain HI4320) protein is UPF0181 protein PMI1604.